We begin with the raw amino-acid sequence, 206 residues long: Cytochrome c oxidase assembly protein CtaG (206 aa).

Topologically, residues 1–17 (MPEVQPSALPKPAPRLG) are cytoplasmic. Residues 18 to 40 (RDAAVASICGFVVALMVGASFAA) form a helical; Signal-anchor for type II membrane protein membrane-spanning segment. The Periplasmic portion of the chain corresponds to 41–206 (VPFYDWFCRT…GEPDQRKGNL (166 aa)).

This sequence belongs to the COX11/CtaG family.

The protein resides in the cell inner membrane. Functionally, exerts its effect at some terminal stage of cytochrome c oxidase synthesis, probably by being involved in the insertion of the copper B into subunit I. The sequence is that of Cytochrome c oxidase assembly protein CtaG from Rhodopseudomonas palustris (strain BisB5).